Reading from the N-terminus, the 816-residue chain is Pentatricopeptide repeat-containing protein At5g12100, mitochondrial (816 aa).

A mitochondrion-targeting transit peptide spans 1 to 39; it reads MVTRLRLVSRSSRYATVKFTDSVSACSCRRLFSASTDPE. A disordered region spans residues 34–57; sequence ASTDPEPESQPEQAPPTNPVTGDE. PPR repeat units follow at residues 108-142, 143-177, 178-212, 213-247, 248-282, 283-317, 318-352, 353-387, 388-422, 423-457, 458-492, 493-527, 528-562, 563-597, 598-632, 633-662, 664-698, 699-733, 734-768, and 769-803; these read HDFSYLLLSVLLNESKMISEAADLFFALRNEGIYP, SSDSLTLLLDHLVKTKQFRVTINVFLNILESDFRP, SKFMYGKAIQAAVKLSDVGKGLELFNRMKHDRIYP, SVFIYNVLIDGLCKGKRMNDAEQLFDEMLARRLLP, SLITYNTLIDGYCKAGNPEKSFKVRERMKADHIEP, SLITFNTLLKGLFKAGMVEDAENVLKEMKDLGFVP, DAFTFSILFDGYSSNEKAEAALGVYETAVDSGVKM, NAYTCSILLNALCKEGKIEKAEEILGREMAKGLVP, NEVIYNTMIDGYCRKGDLVGARMKIEAMEKQGMKP, DHLAYNCLIRRFCELGEMENAEKEVNKMKLKGVSP, SVETYNILIGGYGRKYEFDKCFDILKEMEDNGTMP, NVVSYGTLINCLCKGSKLLEAQIVKRDMEDRGVSP, KVRIYNMLIDGCCSKGKIEDAFRFSKEMLKKGIEL, NLVTYNTLIDGLSMTGKLSEAEDLLLEISRKGLKP, DVFTYNSLISGYGFAGNVQRCIALYEEMKRSGIKP, TLKTYHLLISLCTKEGIELTERLFGEMSLK, DLLVYNGVLHCYAVHGDMEKAFNLQKQMIEKSIGL, DKTTYNSLILGQLKVGKLCEVRSLIDEMNAREMEP, EADTYNIIVKGHCEVKDYMSAYVWYREMQEKGFLL, and DVCIGNELVSGLKEEWRSKEAEIVISEMNGRMLGD.

The protein belongs to the PPR family. P subfamily.

It localises to the mitochondrion. The polypeptide is Pentatricopeptide repeat-containing protein At5g12100, mitochondrial (Arabidopsis thaliana (Mouse-ear cress)).